The sequence spans 121 residues: MKRADDFQQRRAHLANLSDEELQTRFWEMAEKIVDPLLDLGKKNTTPSIERSVLLRMGFSSLEAKAIVDKTMDRGLMGKGAGHIVYKIAKEKNISVREAGLALSEGKYWDDAIQIFKGGVK.

Heterotetramer of 2 alpha (OraS) and 2 beta (OraE) subunits.

It catalyses the reaction D-ornithine = (2R,4S)-2,4-diaminopentanoate. Increased activity in the presence of dithiothreitol (DTT) in vitro. Inhibited by 1 mM potassium phosphate and potassium chloride. Inhibited by L-alpha-ornithine, D,L-alpha-lysine, L-beta-lysine (50%-60%), L-alpha-lysine (26%) and by delta-amino-n-valeric acid to a lesser extent. Significant decrease in activity is observed in the presence of 0.2 mM p-chloromercuribenzoate, N-ethylmaleimide and also by 2 mM iodoacetate to a lesser extent but not inhibited by arsenite. Functionally, component of a complex that catalyzes the reversible migration of the omega amino group of D-ornithine to C-4 to form (2R,4S)-2,4-diaminopentanoic acid. The role of OraS remains obscure; however, it seems to be required for a correct folding of the OraE subunit. The complex is active only on D-ornithine and 2,4-diaminopentanoic acid and not active on L-ornithine, L-beta-lysine, L-alpha-lysine or D-alpha-lysine. The chain is D-ornithine 4,5-aminomutase subunit alpha (oraS) from Acetoanaerobium sticklandii (strain ATCC 12662 / DSM 519 / JCM 1433 / CCUG 9281 / NCIMB 10654 / HF) (Clostridium sticklandii).